Here is a 533-residue protein sequence, read N- to C-terminus: Monogalactosyldiacylglycerol synthase 1, chloroplastic (533 aa).

2 residues coordinate a 1,2-diacyl-sn-glycero-3-phospho-(1'-sn-glycerol): histidine 155 and proline 189. Residue histidine 155 participates in UDP binding. The required for binding to diacyl glycerol stretch occupies residues 192-215 (QLPRSYNFLVKHGTLWKMTYYGTS). UDP contacts are provided by residues arginine 324, phenylalanine 413, isoleucine 414, 434 to 438 (GTIAE), and glutamate 456.

The protein belongs to the glycosyltransferase 28 family. In terms of assembly, homodimer. As to expression, expressed in roots, stems, leaves, flowers, siliques and seeds.

The protein localises to the plastid. The protein resides in the chloroplast inner membrane. The enzyme catalyses a 1,2-diacyl-sn-glycerol + UDP-alpha-D-galactose = a 1,2-diacyl-3-O-(beta-D-galactosyl)-sn-glycerol + UDP + H(+). The catalysed reaction is 1,2-di-(9Z,12Z-octadecadienoyl)-sn-glycerol + UDP-alpha-D-galactose = 1,2-di-(9Z,12Z-octadecadienoyl)-3-beta-D-galactosyl-sn-glycerol + UDP + H(+). It carries out the reaction 1-(9Z-octadecenoyl)-2-hexadecanoyl-sn-glycerol + UDP-alpha-D-galactose = 1-(9Z-octadecenoyl)-2-hexadecanoyl-3-beta-D-galactosyl-sn-glycerol + UDP + H(+). It catalyses the reaction 1,2-di-(9Z-octadecenoyl)-sn-glycerol + UDP-alpha-D-galactose = 1,2-di-(9Z-octadecenoyl)-3-beta-D-galactosyl-sn-glycerol + UDP + H(+). With respect to regulation, activated by phosphatidate (PA) and phosphatidylglycerol (PG). Inhibited by galvestine-1. Functionally, involved in the synthesis of the major structural component of photosynthetic membranes. Required for proper thylakoid membrane biogenesis. Does not discriminate between prokaryotic (18:1/16:0) or eukaryotic (18:2/18:2) 1,2-diacylglycerol species, but operates with some preference for the prokaryotic one. Is responsible for most galactolipid synthesis in chloroplasts. Required for the formation of thylakoid membranes and functional photosynthetic electron transport during cotyledons greening in young seedlings. May link galactolipid synthesis with the coordinated transcriptional regulation of chloroplasts and other organelles during cotyledon greening. The chain is Monogalactosyldiacylglycerol synthase 1, chloroplastic from Arabidopsis thaliana (Mouse-ear cress).